The chain runs to 106 residues: UPF0145 protein CKL_2433 (106 aa).

The protein belongs to the UPF0145 family.

The protein is UPF0145 protein CKL_2433 of Clostridium kluyveri (strain ATCC 8527 / DSM 555 / NBRC 12016 / NCIMB 10680 / K1).